Consider the following 133-residue polypeptide: Probable non-specific lipid-transfer protein 2 (133 aa).

An N-terminal signal peptide occupies residues 1–31; that stretch reads MRTVSMAALVVIAAALAWTSSAEPAPAPAPG. 4 disulfides stabilise this stretch: C35-C83, C45-C60, C61-C106, and C81-C121.

This sequence belongs to the plant LTP family.

In terms of biological role, plant non-specific lipid-transfer proteins transfer phospholipids as well as galactolipids across membranes. May play a role in wax or cutin deposition in the cell walls of expanding epidermal cells and certain secretory tissues. The chain is Probable non-specific lipid-transfer protein 2 from Parietaria judaica (Pellitory-of-the-wall).